The primary structure comprises 382 residues: Serine/threonine-protein kinase (382 aa).

Residues 1–10 (MENKQCDHLT) are compositionally biased toward basic and acidic residues. A disordered region spans residues 1-75 (MENKQCDHLT…ASESDEDDDD (75 aa)). Residues 12–24 (WFSTTSDASESMD) show a composition bias toward polar residues. Positions 45–75 (ADEDLYSDISEGDLEYSDCDSASESDEDDDD) are enriched in acidic residues. One can recognise a Protein kinase domain in the interval 93–379 (YTVIKTLTPG…AEELLSYPMF (287 aa)). ATP contacts are provided by residues 99–107 (LTPGSEGRV) and Lys122. Asp207 serves as the catalytic Proton acceptor.

The protein belongs to the protein kinase superfamily. Ser/Thr protein kinase family.

The enzyme catalyses L-seryl-[protein] + ATP = O-phospho-L-seryl-[protein] + ADP + H(+). It carries out the reaction L-threonyl-[protein] + ATP = O-phospho-L-threonyl-[protein] + ADP + H(+). In Equus caballus (Horse), this protein is Serine/threonine-protein kinase (US2).